The sequence spans 278 residues: 4-deoxy-L-threo-5-hexosulose-uronate ketol-isomerase (278 aa).

Zn(2+) contacts are provided by His196, His198, Glu203, and His245.

The protein belongs to the KduI family. The cofactor is Zn(2+).

The enzyme catalyses 5-dehydro-4-deoxy-D-glucuronate = 3-deoxy-D-glycero-2,5-hexodiulosonate. It participates in glycan metabolism; pectin degradation; 2-dehydro-3-deoxy-D-gluconate from pectin: step 4/5. Catalyzes the isomerization of 5-dehydro-4-deoxy-D-glucuronate to 3-deoxy-D-glycero-2,5-hexodiulosonate. The polypeptide is 4-deoxy-L-threo-5-hexosulose-uronate ketol-isomerase (Salmonella typhimurium (strain LT2 / SGSC1412 / ATCC 700720)).